A 256-amino-acid chain; its full sequence is Imidazole glycerol phosphate synthase subunit hisF1 (256 aa).

Catalysis depends on residues Asp11 and Asp130.

The protein belongs to the HisA/HisF family. In terms of assembly, heterodimer of HisH and HisF.

The protein localises to the cytoplasm. It carries out the reaction 5-[(5-phospho-1-deoxy-D-ribulos-1-ylimino)methylamino]-1-(5-phospho-beta-D-ribosyl)imidazole-4-carboxamide + L-glutamine = D-erythro-1-(imidazol-4-yl)glycerol 3-phosphate + 5-amino-1-(5-phospho-beta-D-ribosyl)imidazole-4-carboxamide + L-glutamate + H(+). The protein operates within amino-acid biosynthesis; L-histidine biosynthesis; L-histidine from 5-phospho-alpha-D-ribose 1-diphosphate: step 5/9. In terms of biological role, IGPS catalyzes the conversion of PRFAR and glutamine to IGP, AICAR and glutamate. The HisF subunit catalyzes the cyclization activity that produces IGP and AICAR from PRFAR using the ammonia provided by the HisH subunit. The protein is Imidazole glycerol phosphate synthase subunit hisF1 (hisF1) of Parasynechococcus marenigrum (strain WH8102).